Consider the following 471-residue polypeptide: 6-phosphofructo-2-kinase/fructose-2,6-bisphosphatase 1 (471 aa).

Serine 2 bears the N-acetylserine mark. The segment at 2 to 250 (SQEMGELTQT…VYYLMNIHVT (249 aa)) is 6-phosphofructo-2-kinase. A Phosphoserine; by PKA modification is found at serine 33. Residue 49 to 57 (GLPARGKTY) coordinates ATP. The beta-D-fructose 6-phosphate site is built by arginine 82 and arginine 105. Aspartate 131 is a catalytic residue. Positions 133 and 139 each coordinate beta-D-fructose 6-phosphate. Serine 141 is subject to Phosphoserine. Residue cysteine 161 is part of the active site. ATP is bound at residue 170-175 (NIRQVK). Residues lysine 175, arginine 196, and tyrosine 200 each coordinate beta-D-fructose 6-phosphate. A fructose-2,6-bisphosphatase region spans residues 251-471 (PRSIYLCRHG…EALDTVPAHY (221 aa)). Position 258 (arginine 258) interacts with beta-D-fructose 2,6-bisphosphate. Histidine 259 (tele-phosphohistidine intermediate) is an active-site residue. 3 residues coordinate beta-D-fructose 2,6-bisphosphate: asparagine 265, glycine 271, and arginine 308. The active-site Proton donor/acceptor is glutamate 328. Tyrosine 339, arginine 353, lysine 357, tyrosine 368, glutamine 394, and arginine 398 together coordinate beta-D-fructose 2,6-bisphosphate. Residue 350–353 (FALR) coordinates ATP. ATP is bound by residues 394 to 398 (QAVMR) and tyrosine 430.

The protein in the C-terminal section; belongs to the phosphoglycerate mutase family. Homodimer. As to expression, liver.

The catalysed reaction is beta-D-fructose 2,6-bisphosphate + H2O = beta-D-fructose 6-phosphate + phosphate. It carries out the reaction beta-D-fructose 6-phosphate + ATP = beta-D-fructose 2,6-bisphosphate + ADP + H(+). With respect to regulation, phosphorylation at Ser-33 inhibits the kinase and activates the bisphosphatase. Functionally, synthesis and degradation of fructose 2,6-bisphosphate. The sequence is that of 6-phosphofructo-2-kinase/fructose-2,6-bisphosphatase 1 from Bos taurus (Bovine).